A 137-amino-acid polypeptide reads, in one-letter code: Mandibular organ-inhibiting hormone (137 aa).

Residues 1–26 (MTTKCTVMAVVLAACICLQVLPQAYG) form the signal peptide. Q63 is modified (pyrrolidone carboxylic acid). Disulfide bonds link C69–C105, C85–C101, and C88–C114. A Valine amide modification is found at V134.

The protein belongs to the arthropod CHH/MIH/GIH/VIH hormone family. As to expression, produced by the medulla terminalis X-organ in the eyestalks and transported to the sinus gland where it is stored and released.

The protein localises to the secreted. Functionally, represses the synthesis of methyl farnesoate, the precursor of insect juvenile hormone III in the mandibular organ. Also has hyperglycemic activity. The sequence is that of Mandibular organ-inhibiting hormone from Libinia emarginata (Portly spider crab).